The chain runs to 112 residues: Large ribosomal subunit protein P1 (112 aa).

The tract at residues 80–112 (AAAAPAAESKKEEKKKEEESDQSDDDMGFGLFD) is disordered. Basic and acidic residues predominate over residues 87-97 (ESKKEEKKKEE). A phosphoserine mark is found at serine 99 and serine 102.

The protein belongs to the eukaryotic ribosomal protein P1/P2 family. As to quaternary structure, P1 and P2 exist as dimers at the large ribosomal subunit.

Its function is as follows. Plays an important role in the elongation step of protein synthesis. This is Large ribosomal subunit protein P1 (RpLP1) from Drosophila melanogaster (Fruit fly).